The sequence spans 156 residues: H/ACA ribonucleoprotein complex subunit NHP2 (156 aa).

It belongs to the eukaryotic ribosomal protein eL8 family. In terms of assembly, component of the small nucleolar ribonucleoprotein particles containing H/ACA-type snoRNAs (H/ACA snoRNPs). The protein component of the H/ACA snoRNP contains CBF5, GAR1, NHP2 and NOP10. The complex contains a stable core composed of CBF5 and NOP10, to which GAR1 and NHP2 subsequently bind. Interacts with SHQ1. Interacts with NAF1.

The protein resides in the nucleus. It localises to the nucleolus. Its function is as follows. Non-catalytic component of the H/ACA small nucleolar ribonucleoprotein (H/ACA snoRNP), which catalyzes pseudouridylation of rRNA and is required for ribosome biogenesis. This involves the isomerization of uridine such that the ribose is subsequently attached to C5, instead of the normal N1. Pseudouridine ('psi') residues may serve to stabilize the conformation of rRNAs. The H/ACA snoRNP complex also mediates pseudouridylation of other types of RNAs. The H/ACA snoRNP complex mediates pseudouridylation at position 93 in U2 snRNA. Essential for growth. Directly binds H/ACA snoRNAs. The sequence is that of H/ACA ribonucleoprotein complex subunit NHP2 (NHP2) from Saccharomyces cerevisiae (strain ATCC 204508 / S288c) (Baker's yeast).